Here is a 440-residue protein sequence, read N- to C-terminus: Glycerophosphocholine cholinephosphodiesterase ENPP6 (440 aa).

The signal sequence occupies residues 1-22 (MAGKLWTFLLLFGFSWVWPASA). Residues Asp32, Ser71, and Asn92 each contribute to the substrate site. Zn(2+) contacts are provided by Asp32 and Ser71. The active-site Nucleophile is the Ser71. Ser71 is subject to Phosphoserine. N-linked (GlcNAc...) asparagine glycans are attached at residues Asn100 and Asn118. Cys142 and Cys154 are joined by a disulfide. Asp193 is a substrate binding site. 4 residues coordinate Zn(2+): Asp193, His197, Asp240, and His241. Residue His241 participates in substrate binding. N-linked (GlcNAc...) asparagine glycosylation is present at Asn341. His354 serves as a coordination point for substrate. His354 contributes to the Zn(2+) binding site. The N-linked (GlcNAc...) asparagine glycan is linked to Asn404. The GPI-anchor amidated serine moiety is linked to residue Ser419. Residues 420–440 (SSPSIPPNSCALVLILLLYFV) constitute a propeptide, removed in mature form.

Belongs to the nucleotide pyrophosphatase/phosphodiesterase family. As to quaternary structure, homodimer; disulfide-linked. Homotetramer. Requires Zn(2+) as cofactor.

It localises to the cell membrane. The catalysed reaction is sn-glycerol 3-phosphocholine + H2O = phosphocholine + glycerol + H(+). The enzyme catalyses a 1-acyl-sn-glycero-3-phosphocholine + H2O = a 1-acyl-sn-glycerol + phosphocholine + H(+). It carries out the reaction a 1-O-alkyl-sn-glycero-3-phosphocholine + H2O = a 1-O-alkyl-sn-glycerol + phosphocholine + H(+). It catalyses the reaction 1-dodecanoyl-sn-glycero-3-phosphocholine + H2O = 1-dodecanoyl-sn-glycerol + phosphocholine + H(+). The catalysed reaction is 1-hexadecanoyl-sn-glycero-3-phosphocholine + H2O = 1-hexadecanoyl-sn-glycerol + phosphocholine + H(+). The enzyme catalyses 1-(5Z,8Z,11Z,14Z-eicosatetraenoyl)-sn-glycero-3-phosphocholine + H2O = 1-(5Z,8Z,11Z,14Z-eicosatetraenoyl)-sn-glycerol + phosphocholine + H(+). It carries out the reaction 1-tetradecanoyl-sn-glycero-3-phosphocholine + H2O = 1-tetradecanoyl-sn-glycerol + phosphocholine + H(+). It catalyses the reaction sphing-4-enine-phosphocholine + H2O = sphing-4-enine + phosphocholine + H(+). The catalysed reaction is 1-(9Z-octadecenoyl)-sn-glycero-3-phosphocholine + H2O = 1-(9Z-octadecenoyl)-sn-glycerol + phosphocholine + H(+). The enzyme catalyses 1-(9Z,12Z)-octadecadienoyl-sn-glycero-3-phosphocholine + H2O = 1-(9Z,12Z-octadecadienoyl)-sn-glycerol + phosphocholine + H(+). It carries out the reaction glycero-2-phosphocholine + H2O = phosphocholine + glycerol + H(+). Inhibited by EDTA and EGTA in vitro. In terms of biological role, choline-specific glycerophosphodiesterase that hydrolyzes glycerophosphocholine (GPC) and lysophosphatidylcholine (LPC) and contributes to supplying choline to the cells. Has a preference for LPC with short (12:0 and 14:0) or polyunsaturated (18:2 and 20:4) fatty acids. In vitro, hydrolyzes only choline-containing lysophospholipids, such as sphingosylphosphorylcholine (SPC), platelet-activating factor (PAF) and lysoPAF, but not other lysophospholipids. The sequence is that of Glycerophosphocholine cholinephosphodiesterase ENPP6 from Rattus norvegicus (Rat).